A 187-amino-acid chain; its full sequence is Nucleoside-triphosphatase THEP1 (187 aa).

Residues 9–16 (GRPGVGKT) and 100–107 (LIAIDEIG) each bind ATP.

The protein belongs to the THEP1 NTPase family.

The catalysed reaction is a ribonucleoside 5'-triphosphate + H2O = a ribonucleoside 5'-diphosphate + phosphate + H(+). Functionally, has nucleotide phosphatase activity towards ATP, GTP, CTP, TTP and UTP. May hydrolyze nucleoside diphosphates with lower efficiency. The sequence is that of Nucleoside-triphosphatase THEP1 from Hyperthermus butylicus (strain DSM 5456 / JCM 9403 / PLM1-5).